Here is a 432-residue protein sequence, read N- to C-terminus: MAPKKCPETQKSPDVAVLLRSKSRRGPQELEPEAKKLRVQGPVSSRTCESCCLLAELSSLQIPSRSSSIVRDLYQHKLGKATWSSLQQGLQKSFLHSLASYQVFRKAAPFDRRTTSLAWHPTHPSTLAVGSKGGDIMIWNFGIKDKPIFLKGIGAGGSITGLKFNHLNTNQFFASSMEGTTRLQDFKGNILRVYTSSNSCKVWFCSLDVSAKSRVVVTGDNMGHVILLSTDGKELWNLRMHKKKVAHVALNPCCDWLLATASIDQTVKIWDLRQIKGKDSFLYSLPHRHPVNAACFSPDGARLLTTDQNNEIRVYSASQWDSPLNLISHPHRHFQHLTPIKATWHSRHNLIVVGRYPDPNLKSCVPYELRTIDVFDGSSGKMMCQLYDPGYSGITSLNEFNPMGDTLASTMGYHILIWSQEEDGSQKDHERL.

A disordered region spans residues 1–31 (MAPKKCPETQKSPDVAVLLRSKSRRGPQELE). An N6-acetyllysine mark is found at Lys35 and Lys77. Required for interaction with DDB1 regions lie at residues 68 to 79 (SIVRDLYQHKLG) and 87 to 98 (QQGLQKSFLHSL). 5 WD repeats span residues 116 to 151 (SLAW…IFLK), 159 to 194 (ITGL…LRVY), 203 to 238 (WFCS…LWNL), 244 to 287 (KVAH…SLPH), and 290 to 329 (PVNA…LISH). Positions 256–274 (WLLATASIDQTVKIWDLRQ) match the DWD box motif. Positions 334–336 (FQH) are photolesion recognition. 2 WD repeats span residues 343 to 386 (TWHS…MCQL) and 396 to 420 (SLNE…IWSQ).

The protein belongs to the WD repeat DDB2/WDR76 family. Component of the UV-DDB complex which includes DDB1 and DDB2. The UV-DDB complex interacts with monoubiquitinated histone H2A and binds to XPC via the DDB2 subunit. Component of the DCX (DDB1-CUL4-X-box) E3 ubiquitin-protein ligase complex DDB1-CUL4-ROC1 (also known as CUL4-DDB-ROC1 and CUL4-DDB-RBX1), which includes CUL4A or CUL4B, DDB1, DDB2 and RBX1. DDB2 may function as the substrate recognition module within this complex. The DDB1-CUL4-ROC1 complex may associate with the COP9 signalosome, and this inhibits the E3 ubiquitin-protein ligase activity of the complex. A large number of other DCX complexes may also exist in which an alternate substrate targeting subunit replaces DDB2. These targeting subunits are generally known as DCAF (DDB1- and CUL4-associated factor) or CDW (CUL4-DDB1-associated WD40-repeat) proteins. In terms of processing, phosphorylation by ABL1 negatively regulate UV-DDB activity. Ubiquitinated by CUL4A in response to UV irradiation. Ubiquitination appears to both impair DNA-binding and promotes ubiquitin-dependent proteolysis. Degradation of DDB2 at sites of DNA damage may be a prerequisite for their recognition by XPC and subsequent repair. CUL4A-mediated degradation appears to be promoted by ABL1. Post-translationally, ubiquitinated, leading to proteasomal degradation, and deubiquitinated by USP24. Deubiquitinated by USP44; leading to its stabilization on DNA lesions. In terms of processing, acetylated. Deacetylation by SIRT6 in response to UV stress facilitates nucleotide excision repair pathway (the NER pathway) transduction. Expressed in bone marrow, liver, lung, muscle, pancreas and spleen.

The protein localises to the nucleus. The protein resides in the chromosome. The protein operates within protein modification; protein ubiquitination. Functionally, protein, which is both involved in DNA repair and protein ubiquitination, as part of the UV-DDB complex and DCX (DDB1-CUL4-X-box) complexes, respectively. Core component of the UV-DDB complex (UV-damaged DNA-binding protein complex), a complex that recognizes UV-induced DNA damage and recruit proteins of the nucleotide excision repair pathway (the NER pathway) to initiate DNA repair. The UV-DDB complex preferentially binds to cyclobutane pyrimidine dimers (CPD), 6-4 photoproducts (6-4 PP), apurinic sites and short mismatches. Also functions as the substrate recognition module for the DCX (DDB2-CUL4-X-box) E3 ubiquitin-protein ligase complex DDB2-CUL4-ROC1 (also known as CUL4-DDB-ROC1 and CUL4-DDB-RBX1). The DDB2-CUL4-ROC1 complex may ubiquitinate histone H2A, histone H3 and histone H4 at sites of UV-induced DNA damage. The ubiquitination of histones may facilitate their removal from the nucleosome and promote subsequent DNA repair. The DDB2-CUL4-ROC1 complex also ubiquitinates XPC, which may enhance DNA-binding by XPC and promote NER. The DDB2-CUL4-ROC1 complex also ubiquitinates KAT7/HBO1 in response to DNA damage, leading to its degradation: recognizes KAT7/HBO1 following phosphorylation by ATR. The polypeptide is DNA damage-binding protein 2 (Ddb2) (Mus musculus (Mouse)).